The chain runs to 402 residues: Propionate kinase (402 aa).

ATP-binding residues include Asn-11 and Lys-18. Mg(2+) is bound at residue Asn-11. Position 86 (Arg-86) interacts with substrate. Catalysis depends on Asp-143, which acts as the Proton donor/acceptor. Residues His-175, 203–207 (HLGNG), 278–280 (DLR), and 326–330 (GIGEN) each bind ATP.

Belongs to the acetokinase family. TdcD subfamily. Homodimer. Requires Mg(2+) as cofactor.

The catalysed reaction is propanoate + ATP = propanoyl phosphate + ADP. It participates in amino-acid degradation; L-threonine degradation via propanoate pathway; propanoate from L-threonine: step 4/4. In terms of biological role, catalyzes the conversion of propionyl phosphate and ADP to propionate and ATP. The chain is Propionate kinase from Escherichia coli O157:H7.